The following is a 314-amino-acid chain: tRNA-cytidine(32) 2-sulfurtransferase (314 aa).

A PP-loop motif motif is present at residues 49–54 (SGGKDS). 3 residues coordinate [4Fe-4S] cluster: Cys-124, Cys-127, and Cys-215.

The protein belongs to the TtcA family. In terms of assembly, homodimer. Requires Mg(2+) as cofactor. [4Fe-4S] cluster is required as a cofactor.

Its subcellular location is the cytoplasm. The enzyme catalyses cytidine(32) in tRNA + S-sulfanyl-L-cysteinyl-[cysteine desulfurase] + AH2 + ATP = 2-thiocytidine(32) in tRNA + L-cysteinyl-[cysteine desulfurase] + A + AMP + diphosphate + H(+). Its pathway is tRNA modification. Catalyzes the ATP-dependent 2-thiolation of cytidine in position 32 of tRNA, to form 2-thiocytidine (s(2)C32). The sulfur atoms are provided by the cysteine/cysteine desulfurase (IscS) system. The polypeptide is tRNA-cytidine(32) 2-sulfurtransferase (Histophilus somni (strain 129Pt) (Haemophilus somnus)).